Consider the following 1235-residue polypeptide: Cullin-associated NEDD8-dissociated protein 2 (1235 aa).

S2 is modified (N-acetylserine). HEAT repeat units lie at residues 2-39 (STGA…KDSI), 44-81 (DSER…KVKE), 83-119 (QVEN…ELPP), 129-167 (NVCR…RLGA), 171-208 (TFHA…ACST), 210-246 (LFVE…SVGR), 254-291 (AHLD…KCPK), 326-367 (TEDS…SRPD), 371-408 (DFHC…HTRP), 431-468 (AQVP…VLPG), 516-553 (PHLP…TLWP), 564-603 (PYVG…HLGD), 607-644 (DDLE…LRLD), 647-684 (PILA…SQGL), 689-726 (PAVR…TQPS), 730-769 (EVSG…TRPP), 771-812 (VEYS…ALSA), 856-893 (GPQR…GNLP), 895-930 (FLPF…DNLK), 932-965 (YVED…LVFV), 966-1002 (NPPY…DQPH), 1006-1043 (PLLK…NKPS), 1047-1083 (DLLD…DDGL), 1104-1140 (LDMC…LCPA), 1156-1193 (TCTA…NPEV), and 1203-1235 (SAQI…MELS). The segment at 314–345 (YDHDSDDEEQMETEDSEFSEQESEDEYSDDDD) is disordered. Over residues 317 to 345 (DSDDEEQMETEDSEFSEQESEDEYSDDDD) the composition is skewed to acidic residues.

Belongs to the CAND family. Binds TBP, CNOT3 and UBE3C. Post-translationally, ubiquitinated and targeted for proteasomal degradation. In terms of tissue distribution, highly expressed in embryonic limb buds.

The protein resides in the nucleus. Its function is as follows. Probable assembly factor of SCF (SKP1-CUL1-F-box protein) E3 ubiquitin ligase complexes that promotes the exchange of the substrate-recognition F-box subunit in SCF complexes, thereby playing a key role in the cellular repertoire of SCF complexes. This chain is Cullin-associated NEDD8-dissociated protein 2 (Cand2), found in Mus musculus (Mouse).